A 534-amino-acid polypeptide reads, in one-letter code: Bifunctional pantoate ligase/cytidylate kinase (534 aa).

Positions 1–302 (MRLLTTVAAL…LGSTRLIDNT (302 aa)) are pantoate--beta-alanine ligase. Position 48 to 55 (48 to 55 (MGSLHQGH)) interacts with ATP. His-55 acts as the Proton donor in catalysis. Gln-79 contacts (R)-pantoate. A beta-alanine-binding site is contributed by Gln-79. ATP is bound at residue 172–175 (GQKD). Gln-178 provides a ligand contact to (R)-pantoate. Residues Val-201 and 209-212 (CSSR) each bind ATP. A cytidylate kinase region spans residues 303-534 (ILRDRQPIIA…DYYQQRLSQW (232 aa)).

It in the N-terminal section; belongs to the pantothenate synthetase family. In the C-terminal section; belongs to the cytidylate kinase family. Type 1 subfamily.

Its subcellular location is the cytoplasm. The enzyme catalyses (R)-pantoate + beta-alanine + ATP = (R)-pantothenate + AMP + diphosphate + H(+). The catalysed reaction is CMP + ATP = CDP + ADP. It carries out the reaction dCMP + ATP = dCDP + ADP. Its pathway is cofactor biosynthesis; (R)-pantothenate biosynthesis; (R)-pantothenate from (R)-pantoate and beta-alanine: step 1/1. Its function is as follows. Catalyzes the condensation of pantoate with beta-alanine in an ATP-dependent reaction via a pantoyl-adenylate intermediate. In terms of biological role, catalyzes the transfer of a phosphate group from ATP to either CMP or dCMP to form CDP or dCDP and ADP, respectively. The protein is Bifunctional pantoate ligase/cytidylate kinase of Trichormus variabilis (strain ATCC 29413 / PCC 7937) (Anabaena variabilis).